The chain runs to 144 residues: Cytochrome c3 (144 aa).

A signal peptide spans 1–24; sequence MRYLVISLFAVSLLMAGSALVGNA. Residues histidine 51, histidine 54, cysteine 59, cysteine 62, histidine 63, histidine 64, cysteine 76, cysteine 81, histidine 82, histidine 100, cysteine 108, cysteine 111, histidine 112, cysteine 125, cysteine 128, and histidine 129 each contribute to the heme c site.

This sequence belongs to the cytochrome c family. Homodimer. Heterotrimer of cytochrome c3 FDH2C and formate dehydrogenase FDH2 alpha and beta subunits that forms the FdhABC(3) complex. Post-translationally, binds 4 heme c groups per subunit.

It localises to the periplasm. Functionally, participates in sulfate respiration coupled with phosphorylation by transferring electrons from the enzyme dehydrogenase to ferredoxin. Gamma chain of the formate dehydrogenase (FDH) that catalyzes the reversible two-electron oxidation of formate to carbon dioxide. The gamma subunit of formate dehydrogenase forms a c-type heme. The sequence is that of Cytochrome c3 from Nitratidesulfovibrio vulgaris (strain ATCC 29579 / DSM 644 / CCUG 34227 / NCIMB 8303 / VKM B-1760 / Hildenborough) (Desulfovibrio vulgaris).